A 475-amino-acid polypeptide reads, in one-letter code: Ribulose bisphosphate carboxylase large chain (475 aa).

A propeptide spanning residues Met1–Ser2 is cleaved from the precursor. Residue Pro3 is modified to N-acetylproline. Position 14 is an N6,N6,N6-trimethyllysine (Lys14). Substrate is bound by residues Asn123 and Thr173. Lys175 acts as the Proton acceptor in catalysis. Substrate is bound at residue Lys177. Mg(2+)-binding residues include Lys201, Asp203, and Glu204. Lys201 carries the post-translational modification N6-carboxylysine. The active-site Proton acceptor is His294. Substrate-binding residues include Arg295, His327, and Ser379.

It belongs to the RuBisCO large chain family. Type I subfamily. As to quaternary structure, heterohexadecamer of 8 large chains and 8 small chains; disulfide-linked. The disulfide link is formed within the large subunit homodimers. Mg(2+) serves as cofactor. The disulfide bond which can form in the large chain dimeric partners within the hexadecamer appears to be associated with oxidative stress and protein turnover.

It localises to the plastid. Its subcellular location is the chloroplast. It carries out the reaction 2 (2R)-3-phosphoglycerate + 2 H(+) = D-ribulose 1,5-bisphosphate + CO2 + H2O. The enzyme catalyses D-ribulose 1,5-bisphosphate + O2 = 2-phosphoglycolate + (2R)-3-phosphoglycerate + 2 H(+). Its function is as follows. RuBisCO catalyzes two reactions: the carboxylation of D-ribulose 1,5-bisphosphate, the primary event in carbon dioxide fixation, as well as the oxidative fragmentation of the pentose substrate in the photorespiration process. Both reactions occur simultaneously and in competition at the same active site. This Carica papaya (Papaya) protein is Ribulose bisphosphate carboxylase large chain.